Consider the following 119-residue polypeptide: Large ribosomal subunit protein bL20 (119 aa).

It belongs to the bacterial ribosomal protein bL20 family.

Its function is as follows. Binds directly to 23S ribosomal RNA and is necessary for the in vitro assembly process of the 50S ribosomal subunit. It is not involved in the protein synthesizing functions of that subunit. In Polaromonas sp. (strain JS666 / ATCC BAA-500), this protein is Large ribosomal subunit protein bL20.